Reading from the N-terminus, the 464-residue chain is Siroheme synthase (464 aa).

Positions 1 to 203 (MEFLPLFHNL…GQGDEAERLL (203 aa)) are precorrin-2 dehydrogenase /sirohydrochlorin ferrochelatase. Residues 22 to 23 (EI) and 43 to 44 (PQ) contribute to the NAD(+) site. At S128 the chain carries Phosphoserine. Positions 216-464 (GEVYLVGAGP…KWFEGAQSQV (249 aa)) are uroporphyrinogen-III C-methyltransferase. S-adenosyl-L-methionine is bound at residue P225. D248 (proton acceptor) is an active-site residue. Catalysis depends on K270, which acts as the Proton donor. Residues 301–303 (GGD), I306, 331–332 (TA), M383, and G412 contribute to the S-adenosyl-L-methionine site.

The protein in the N-terminal section; belongs to the precorrin-2 dehydrogenase / sirohydrochlorin ferrochelatase family. It in the C-terminal section; belongs to the precorrin methyltransferase family.

It carries out the reaction uroporphyrinogen III + 2 S-adenosyl-L-methionine = precorrin-2 + 2 S-adenosyl-L-homocysteine + H(+). The catalysed reaction is precorrin-2 + NAD(+) = sirohydrochlorin + NADH + 2 H(+). It catalyses the reaction siroheme + 2 H(+) = sirohydrochlorin + Fe(2+). Its pathway is cofactor biosynthesis; adenosylcobalamin biosynthesis; precorrin-2 from uroporphyrinogen III: step 1/1. It participates in cofactor biosynthesis; adenosylcobalamin biosynthesis; sirohydrochlorin from precorrin-2: step 1/1. The protein operates within porphyrin-containing compound metabolism; siroheme biosynthesis; precorrin-2 from uroporphyrinogen III: step 1/1. It functions in the pathway porphyrin-containing compound metabolism; siroheme biosynthesis; siroheme from sirohydrochlorin: step 1/1. Its pathway is porphyrin-containing compound metabolism; siroheme biosynthesis; sirohydrochlorin from precorrin-2: step 1/1. In terms of biological role, multifunctional enzyme that catalyzes the SAM-dependent methylations of uroporphyrinogen III at position C-2 and C-7 to form precorrin-2 via precorrin-1. Then it catalyzes the NAD-dependent ring dehydrogenation of precorrin-2 to yield sirohydrochlorin. Finally, it catalyzes the ferrochelation of sirohydrochlorin to yield siroheme. In Pseudomonas fluorescens (strain SBW25), this protein is Siroheme synthase.